The chain runs to 383 residues: Na(+)/H(+) antiporter NhaA (383 aa).

The next 11 membrane-spanning stretches (helical) occupy residues 10-30 (LIGG…NNSP), 56-76 (LMHW…GLEI), 91-111 (IITP…IYLS), 121-141 (GWAI…ALLG), 150-170 (LLVI…IAIF), 174-194 (SLSL…IICN), 206-226 (VVLG…ATLA), 254-274 (PWII…ISFS), 275-295 (GISF…GLFV), 327-347 (GISL…VLAF), and 355-375 (AIKI…YIVL).

It belongs to the NhaA Na(+)/H(+) (TC 2.A.33) antiporter family.

It localises to the cell inner membrane. The catalysed reaction is Na(+)(in) + 2 H(+)(out) = Na(+)(out) + 2 H(+)(in). In terms of biological role, na(+)/H(+) antiporter that extrudes sodium in exchange for external protons. In Francisella tularensis subsp. novicida (strain U112), this protein is Na(+)/H(+) antiporter NhaA.